Reading from the N-terminus, the 275-residue chain is 2,3,4,5-tetrahydropyridine-2,6-dicarboxylate N-succinyltransferase (275 aa).

The protein belongs to the transferase hexapeptide repeat family.

The protein resides in the cytoplasm. The catalysed reaction is (S)-2,3,4,5-tetrahydrodipicolinate + succinyl-CoA + H2O = (S)-2-succinylamino-6-oxoheptanedioate + CoA. Its pathway is amino-acid biosynthesis; L-lysine biosynthesis via DAP pathway; LL-2,6-diaminopimelate from (S)-tetrahydrodipicolinate (succinylase route): step 1/3. This chain is 2,3,4,5-tetrahydropyridine-2,6-dicarboxylate N-succinyltransferase, found in Cupriavidus taiwanensis (strain DSM 17343 / BCRC 17206 / CCUG 44338 / CIP 107171 / LMG 19424 / R1) (Ralstonia taiwanensis (strain LMG 19424)).